The sequence spans 141 residues: Myosin regulatory light chain cdc4 (141 aa).

Phosphoserine occurs at positions 2 and 6. EF-hand domains are found at residues 3–38, 74–109, and 109–141; these read TDDS…CGQN, GDPE…LGEK, and KLSN…ILAN. Aspartate 87, aspartate 89, threonine 91, methionine 93, and glutamate 98 together coordinate Ca(2+).

Binds to myosin II chains myo2 and myo3. Interacts with vps27 and a PI 4-kinase pik1. Post-translationally, phosphorylated on either Ser-2 or Ser-6 but not both. Phosphorylation is not essential for the function of the protein.

The protein localises to the cytoplasm. In terms of biological role, involved in cytokinesis. Required for the formation and function of the contractile ring. The polypeptide is Myosin regulatory light chain cdc4 (cdc4) (Schizosaccharomyces pombe (strain 972 / ATCC 24843) (Fission yeast)).